Reading from the N-terminus, the 152-residue chain is Xanthine-guanine phosphoribosyltransferase (152 aa).

5-phospho-alpha-D-ribose 1-diphosphate contacts are provided by residues 37–38, Arg-69, and 88–96; these read RG and DDLVDTGGT. GMP is bound at residue Arg-69. Asp-89 contacts Mg(2+). Guanine is bound by residues Asp-92 and Ile-135. Xanthine is bound by residues Asp-92 and Ile-135. GMP contacts are provided by residues 92–96 and 134–135; these read DTGGT and WI.

The protein belongs to the purine/pyrimidine phosphoribosyltransferase family. XGPT subfamily. As to quaternary structure, homotetramer. Requires Mg(2+) as cofactor.

It localises to the cell inner membrane. It catalyses the reaction GMP + diphosphate = guanine + 5-phospho-alpha-D-ribose 1-diphosphate. The catalysed reaction is XMP + diphosphate = xanthine + 5-phospho-alpha-D-ribose 1-diphosphate. The enzyme catalyses IMP + diphosphate = hypoxanthine + 5-phospho-alpha-D-ribose 1-diphosphate. It functions in the pathway purine metabolism; GMP biosynthesis via salvage pathway; GMP from guanine: step 1/1. Its pathway is purine metabolism; XMP biosynthesis via salvage pathway; XMP from xanthine: step 1/1. Purine salvage pathway enzyme that catalyzes the transfer of the ribosyl-5-phosphate group from 5-phospho-alpha-D-ribose 1-diphosphate (PRPP) to the N9 position of the 6-oxopurines guanine and xanthine to form the corresponding ribonucleotides GMP (guanosine 5'-monophosphate) and XMP (xanthosine 5'-monophosphate), with the release of PPi. To a lesser extent, also acts on hypoxanthine. The sequence is that of Xanthine-guanine phosphoribosyltransferase from Photobacterium profundum (strain SS9).